The sequence spans 191 residues: Ribosome maturation factor RimM (191 aa).

The PRC barrel domain occupies 107-184; it reads EDDEWHQDDL…LVLVSPPPGL (78 aa).

This sequence belongs to the RimM family. Binds ribosomal protein uS19.

It localises to the cytoplasm. In terms of biological role, an accessory protein needed during the final step in the assembly of 30S ribosomal subunit, possibly for assembly of the head region. Essential for efficient processing of 16S rRNA. May be needed both before and after RbfA during the maturation of 16S rRNA. It has affinity for free ribosomal 30S subunits but not for 70S ribosomes. The chain is Ribosome maturation factor RimM from Kocuria rhizophila (strain ATCC 9341 / DSM 348 / NBRC 103217 / DC2201).